Consider the following 865-residue polypeptide: Lactose regulatory protein LAC9 (865 aa).

Residues 1–15 (MGSRASNSPSFSSKA) are compositionally biased toward polar residues. The segment at 1-87 (MGSRASNSPS…NNNNNNNKKS (87 aa)) is disordered. Basic and acidic residues predominate over residues 22–34 (EYKKNAVKKETIR). A compositionally biased stretch (low complexity) spans 67-85 (SNGNKNDSNANNNNNNNNK). 6 residues coordinate Zn(2+): Cys-95, Cys-98, Cys-105, Cys-112, Cys-115, and Cys-122. Residues 95–122 (CDACRKKKWKCSKTVPTCTNCLKYNLDC) constitute a DNA-binding region (zn(2)-C6 fungal-type). Residues 818–840 (LQSSTTQMRPPTTSGWPDTNNFL) form a disordered region.

Its subcellular location is the nucleus. Functionally, positive regulatory protein, that controls induction of the lactose-galactose regulation of Kluyveromyces lactis. In Kluyveromyces lactis (strain ATCC 8585 / CBS 2359 / DSM 70799 / NBRC 1267 / NRRL Y-1140 / WM37) (Yeast), this protein is Lactose regulatory protein LAC9 (LAC9).